The chain runs to 168 residues: DAZ-associated protein 2 (168 aa).

Over residues 1–13 (MNSKGQYPTQPTY) the composition is skewed to low complexity. Residues 1–25 (MNSKGQYPTQPTYPVQPPGNPVYPQ) are disordered. A PPAY motif is present at residues 39-42 (PPAY). S77 bears the Phosphoserine mark.

Interacts with SOX6. Interacts with DAZ1 and DAZL. Interacts with IL17RB. May interact with FAM168B. Interacts with INCA1. Interacts with EIF4G1 and EIF4G2. Interacts (via PPAY motif) with NEDD4 (via WW domains). Interacts with transcription factor TCF4; the interaction results in localization of DAZAP2 to the nucleus. Interacts with transcription factors TCF7 and TCF7L1. Interacts with transcription factor LEF1. Interacts with serine/threonine-protein kinase HIPK2; the interaction results in phosphorylation of DAZAP2 which causes localization of DAZAP2 to the nucleus, reduces interaction of DAZAP2 with HIPK2 and prevents DAZAP2-dependent degradation of HIPK2. Interacts with ubiquitin ligase SIAH1; the interaction is decreased following phosphorylation of DAZAP2 by HIPK2. Interacts with TP53; the interaction is triggered by DNA damage. In terms of processing, ubiquitinated by SMURF2, leading to proteasomal degradation. Ubiquitinated by NEDD4, leading to proteasomal degradation. Following DNA damage, phosphorylated by HIPK2 which promotes DAZAP2 localization to the nucleus, reduces interaction of DAZAP2 with HIPK2 and SIAH1, and prevents DAZAP2-dependent ubiquitination of HIPK2 by E3 ubiquitin-protein ligase SIAH1 and subsequent HIPK2 proteasomal degradation.

It localises to the cytoplasm. The protein localises to the nucleus. Its subcellular location is the nucleus speckle. It is found in the nuclear body. The protein resides in the stress granule. In terms of biological role, in unstressed cells, promotes SIAH1-mediated polyubiquitination and degradation of the serine/threonine-protein kinase HIPK2, probably by acting as a loading factor that potentiates complex formation between HIPK2 and ubiquitin ligase SIAH1. In response to DNA damage, localizes to the nucleus following phosphorylation by HIPK2 and modulates the expression of a subset of TP53/p53 target genes by binding to TP53 at target gene promoters. This limits the expression of a number of cell death-mediating TP53 target genes, reducing DNA damage-induced cell death. Enhances the binding of transcription factor TCF7L2/TCF4, a Wnt signaling pathway effector, to the promoters of target genes. Plays a role in stress granule formation. The protein is DAZ-associated protein 2 of Rattus norvegicus (Rat).